A 366-amino-acid polypeptide reads, in one-letter code: Ribosome-binding ATPase YchF (366 aa).

The 257-residue stretch at 3–259 (LTAGIVGLPN…LEGEEKQMFL (257 aa)) folds into the OBG-type G domain. 12 to 17 (NVGKST) contributes to the ATP binding site. 2 residues coordinate Mg(2+): Ser16 and Thr36. One can recognise a TGS domain in the interval 281–364 (GLATYFTAGE…QDGDVIHFRF (84 aa)).

The protein belongs to the TRAFAC class OBG-HflX-like GTPase superfamily. OBG GTPase family. YchF/OLA1 subfamily. Mg(2+) is required as a cofactor.

Functionally, ATPase that binds to both the 70S ribosome and the 50S ribosomal subunit in a nucleotide-independent manner. This Bacillus subtilis (strain 168) protein is Ribosome-binding ATPase YchF.